Here is a 218-residue protein sequence, read N- to C-terminus: ATP phosphoribosyltransferase (218 aa).

Belongs to the ATP phosphoribosyltransferase family. Short subfamily. In terms of assembly, heteromultimer composed of HisG and HisZ subunits.

It localises to the cytoplasm. It carries out the reaction 1-(5-phospho-beta-D-ribosyl)-ATP + diphosphate = 5-phospho-alpha-D-ribose 1-diphosphate + ATP. Its pathway is amino-acid biosynthesis; L-histidine biosynthesis; L-histidine from 5-phospho-alpha-D-ribose 1-diphosphate: step 1/9. In terms of biological role, catalyzes the condensation of ATP and 5-phosphoribose 1-diphosphate to form N'-(5'-phosphoribosyl)-ATP (PR-ATP). Has a crucial role in the pathway because the rate of histidine biosynthesis seems to be controlled primarily by regulation of HisG enzymatic activity. This Deinococcus radiodurans (strain ATCC 13939 / DSM 20539 / JCM 16871 / CCUG 27074 / LMG 4051 / NBRC 15346 / NCIMB 9279 / VKM B-1422 / R1) protein is ATP phosphoribosyltransferase (hisG).